The primary structure comprises 197 residues: 7-methyl-GTP pyrophosphatase (197 aa).

The active-site Proton acceptor is aspartate 73.

This sequence belongs to the Maf family. YceF subfamily. Requires a divalent metal cation as cofactor.

The protein localises to the cytoplasm. The enzyme catalyses N(7)-methyl-GTP + H2O = N(7)-methyl-GMP + diphosphate + H(+). Nucleoside triphosphate pyrophosphatase that hydrolyzes 7-methyl-GTP (m(7)GTP). May have a dual role in cell division arrest and in preventing the incorporation of modified nucleotides into cellular nucleic acids. The protein is 7-methyl-GTP pyrophosphatase of Alcanivorax borkumensis (strain ATCC 700651 / DSM 11573 / NCIMB 13689 / SK2).